Consider the following 235-residue polypeptide: NifU-like protein 2, chloroplastic (235 aa).

A chloroplast-targeting transit peptide spans 1-16; it reads MQLLTLNPAAISRTPP.

Belongs to the NifU family. As to quaternary structure, homodimer; disulfide-linked. It depends on [2Fe-2S] cluster as a cofactor. In terms of tissue distribution, predominantly expressed in leaves and floral stalks. Ubiquitous (at protein level).

The protein resides in the plastid. Its subcellular location is the chloroplast stroma. Its function is as follows. Molecular scaffold for [Fe-S] cluster assembly of chloroplastic iron-sulfur proteins. Required for biogenesis of ferredoxin, a major photosynthetic electron carrier containing [2Fe-2S] cluster. Required for the assembly of photosystem I complex. This Arabidopsis thaliana (Mouse-ear cress) protein is NifU-like protein 2, chloroplastic (NIFU2).